The following is a 215-amino-acid chain: ATP-dependent Clp protease proteolytic subunit (215 aa).

Residue S116 is the Nucleophile of the active site. H141 is a catalytic residue.

The protein belongs to the peptidase S14 family. Fourteen ClpP subunits assemble into 2 heptameric rings which stack back to back to give a disk-like structure with a central cavity, resembling the structure of eukaryotic proteasomes.

The protein resides in the cytoplasm. The enzyme catalyses Hydrolysis of proteins to small peptides in the presence of ATP and magnesium. alpha-casein is the usual test substrate. In the absence of ATP, only oligopeptides shorter than five residues are hydrolyzed (such as succinyl-Leu-Tyr-|-NHMec, and Leu-Tyr-Leu-|-Tyr-Trp, in which cleavage of the -Tyr-|-Leu- and -Tyr-|-Trp bonds also occurs).. Its function is as follows. Cleaves peptides in various proteins in a process that requires ATP hydrolysis. Has a chymotrypsin-like activity. Plays a major role in the degradation of misfolded proteins. The sequence is that of ATP-dependent Clp protease proteolytic subunit from Psychrobacter cryohalolentis (strain ATCC BAA-1226 / DSM 17306 / VKM B-2378 / K5).